Reading from the N-terminus, the 405-residue chain is Acetate kinase (405 aa).

Residue N7 coordinates Mg(2+). Residue K14 participates in ATP binding. A substrate-binding site is contributed by R98. D155 (proton donor/acceptor) is an active-site residue. Residues H215–G219, D289–R291, and G337–N341 contribute to the ATP site. Position 391 (E391) interacts with Mg(2+).

Belongs to the acetokinase family. Homodimer. Mg(2+) is required as a cofactor. Requires Mn(2+) as cofactor.

The protein resides in the cytoplasm. It catalyses the reaction acetate + ATP = acetyl phosphate + ADP. It functions in the pathway metabolic intermediate biosynthesis; acetyl-CoA biosynthesis; acetyl-CoA from acetate: step 1/2. Catalyzes the formation of acetyl phosphate from acetate and ATP. Can also catalyze the reverse reaction. The polypeptide is Acetate kinase (Desulfotalea psychrophila (strain LSv54 / DSM 12343)).